The primary structure comprises 340 residues: Ribonucleoside-diphosphate reductase small subunit (340 aa).

Residues Asp94, Glu124, and His127 each coordinate Fe cation. The active site involves Tyr131. A helical membrane pass occupies residues 180–200 (FILMILIEGIFFAASFAAIAY). Residues Glu187, Glu221, and His224 each coordinate Fe cation.

The protein belongs to the ribonucleoside diphosphate reductase small chain family. Heterotetramer composed of a homodimer of the large subunit (R1) and a homodimer of the small subunit (R2). Larger multisubunit protein complex are also active, composed of (R1)n(R2)n. Requires Fe cation as cofactor.

Its subcellular location is the host membrane. The catalysed reaction is a 2'-deoxyribonucleoside 5'-diphosphate + [thioredoxin]-disulfide + H2O = a ribonucleoside 5'-diphosphate + [thioredoxin]-dithiol. Functionally, ribonucleoside-diphosphate reductase holoenzyme provides the precursors necessary for viral DNA synthesis. Allows virus growth in non-dividing cells, as well as reactivation from latency in infected hosts. Catalyzes the biosynthesis of deoxyribonucleotides from the corresponding ribonucleotides. The polypeptide is Ribonucleoside-diphosphate reductase small subunit (Human herpesvirus 1 (strain KOS) (HHV-1)).